Consider the following 543-residue polypeptide: CTP synthase (543 aa).

Positions 1–266 are amidoligase domain; that stretch reads MTKFIFVTGG…DDIICERFGI (266 aa). Ser-13 provides a ligand contact to CTP. Position 13 (Ser-13) interacts with UTP. ATP-binding positions include 14–19 and Asp-71; that span reads SLGKGI. The Mg(2+) site is built by Asp-71 and Glu-140. Residues 147–149, 187–192, and Lys-223 each bind CTP; these read DIE and KTKPTQ. Residues 187 to 192 and Lys-223 each bind UTP; that span reads KTKPTQ. In terms of domain architecture, Glutamine amidotransferase type-1 spans 291–543; it reads TVAIVGKYVE…VKAAIDHQNI (253 aa). Residue Gly-354 coordinates L-glutamine. Cys-381 serves as the catalytic Nucleophile; for glutamine hydrolysis. Residues 382–385, Glu-404, and Arg-471 contribute to the L-glutamine site; that span reads LGMQ. Active-site residues include His-516 and Glu-518.

This sequence belongs to the CTP synthase family. In terms of assembly, homotetramer.

The enzyme catalyses UTP + L-glutamine + ATP + H2O = CTP + L-glutamate + ADP + phosphate + 2 H(+). It catalyses the reaction L-glutamine + H2O = L-glutamate + NH4(+). It carries out the reaction UTP + NH4(+) + ATP = CTP + ADP + phosphate + 2 H(+). It functions in the pathway pyrimidine metabolism; CTP biosynthesis via de novo pathway; CTP from UDP: step 2/2. Its activity is regulated as follows. Allosterically activated by GTP, when glutamine is the substrate; GTP has no effect on the reaction when ammonia is the substrate. The allosteric effector GTP functions by stabilizing the protein conformation that binds the tetrahedral intermediate(s) formed during glutamine hydrolysis. Inhibited by the product CTP, via allosteric rather than competitive inhibition. Its function is as follows. Catalyzes the ATP-dependent amination of UTP to CTP with either L-glutamine or ammonia as the source of nitrogen. Regulates intracellular CTP levels through interactions with the four ribonucleotide triphosphates. This Psychrobacter sp. (strain PRwf-1) protein is CTP synthase.